The primary structure comprises 230 residues: N-(5'-phosphoribosyl)anthranilate isomerase (230 aa).

The protein belongs to the TrpF family.

It catalyses the reaction N-(5-phospho-beta-D-ribosyl)anthranilate = 1-(2-carboxyphenylamino)-1-deoxy-D-ribulose 5-phosphate. Its pathway is amino-acid biosynthesis; L-tryptophan biosynthesis; L-tryptophan from chorismate: step 3/5. This chain is N-(5'-phosphoribosyl)anthranilate isomerase, found in Ralstonia nicotianae (strain ATCC BAA-1114 / GMI1000) (Ralstonia solanacearum).